Here is a 319-residue protein sequence, read N- to C-terminus: Acetyl-coenzyme A carboxylase carboxyl transferase subunit alpha (319 aa).

In terms of domain architecture, CoA carboxyltransferase C-terminal spans 38–292; that stretch reads ALDKKAETLL…GKAIEMMLKE (255 aa).

Belongs to the AccA family. In terms of assembly, acetyl-CoA carboxylase is a heterohexamer composed of biotin carboxyl carrier protein (AccB), biotin carboxylase (AccC) and two subunits each of ACCase subunit alpha (AccA) and ACCase subunit beta (AccD).

Its subcellular location is the cytoplasm. It catalyses the reaction N(6)-carboxybiotinyl-L-lysyl-[protein] + acetyl-CoA = N(6)-biotinyl-L-lysyl-[protein] + malonyl-CoA. The protein operates within lipid metabolism; malonyl-CoA biosynthesis; malonyl-CoA from acetyl-CoA: step 1/1. Its function is as follows. Component of the acetyl coenzyme A carboxylase (ACC) complex. First, biotin carboxylase catalyzes the carboxylation of biotin on its carrier protein (BCCP) and then the CO(2) group is transferred by the carboxyltransferase to acetyl-CoA to form malonyl-CoA. The protein is Acetyl-coenzyme A carboxylase carboxyl transferase subunit alpha of Cereibacter sphaeroides (strain ATCC 17029 / ATH 2.4.9) (Rhodobacter sphaeroides).